A 1450-amino-acid polypeptide reads, in one-letter code: M-protein, striated muscle (1450 aa).

The disordered stretch occupies residues 66-87 (AHEAMQESRKRTHEQKSHASDE). 2 Ig-like C2-type domains span residues 142-233 (PEIL…CAVV) and 254-359 (PLSY…AFLF). Fibronectin type-III domains follow at residues 373–468 (APMD…ALDP), 501–596 (PPTN…PQDI), 602–695 (APGR…VQAA), 698–800 (CPSY…TMPE), and 803–900 (PAYD…ASPG). Ig-like C2-type domains lie at 899–995 (PGTK…LMTL), 1002–1115 (PTIP…FLRK), 1118–1204 (PHFS…LELS), 1225–1322 (PLKI…QRLK), and 1333–1422 (KVIG…VTVS).

As to expression, expressed in pectoralis and cardiac muscle.

Is a structural constituent of myofibrillar M-band in striated muscle. This chain is M-protein, striated muscle, found in Gallus gallus (Chicken).